A 425-amino-acid polypeptide reads, in one-letter code: Metalloprotease AF_0655 (425 aa).

The protein belongs to the peptidase U62 family.

In terms of biological role, probable metalloprotease. The chain is Metalloprotease AF_0655 from Archaeoglobus fulgidus (strain ATCC 49558 / DSM 4304 / JCM 9628 / NBRC 100126 / VC-16).